The sequence spans 240 residues: MGVTNFFGEAWRTGKSIVTGLGITFREMMFRPAITVFYPEQRDDVPPWFRGIPVLKTDLRTGEYKCTSCMQCAQACPVNVITIEWHQDPETKKKVCDRFAIDMSRCMLCNFCVEACPFDSLVMGYDYELCKVNPENLVFEFEDLLRLGLKYSKAEEPGPKATRSSTPPWVFHGLTNATEDDIQDIHGYLGRPPLPKGYEPELKPQFRKPAEEAAEAQQAEAAGQPAAEPGKTNGEEAGQP.

4Fe-4S ferredoxin-type domains are found at residues 57–86 (TDLR…IEWH) and 97–126 (DRFA…MGYD). [4Fe-4S] cluster contacts are provided by cysteine 66, cysteine 69, cysteine 72, cysteine 76, cysteine 106, cysteine 109, cysteine 112, and cysteine 116. The interval 185 to 240 (IHGYLGRPPLPKGYEPELKPQFRKPAEEAAEAQQAEAAGQPAAEPGKTNGEEAGQP) is disordered. Positions 198 to 211 (YEPELKPQFRKPAE) are enriched in basic and acidic residues. Residues 215-230 (EAQQAEAAGQPAAEPG) show a composition bias toward low complexity.

Belongs to the complex I 23 kDa subunit family. NDH-1 is composed of 14 different subunits. Subunits NuoA, H, J, K, L, M, N constitute the membrane sector of the complex. It depends on [4Fe-4S] cluster as a cofactor.

The protein localises to the cell membrane. It carries out the reaction a quinone + NADH + 5 H(+)(in) = a quinol + NAD(+) + 4 H(+)(out). In terms of biological role, NDH-1 shuttles electrons from NADH, via FMN and iron-sulfur (Fe-S) centers, to quinones in the respiratory chain. The immediate electron acceptor for the enzyme in this species is believed to be ubiquinone. Couples the redox reaction to proton translocation (for every two electrons transferred, four hydrogen ions are translocated across the cytoplasmic membrane), and thus conserves the redox energy in a proton gradient. The protein is NADH-quinone oxidoreductase subunit I 2 of Symbiobacterium thermophilum (strain DSM 24528 / JCM 14929 / IAM 14863 / T).